The sequence spans 425 residues: Divalent metal cation transporter MntH (425 aa).

11 helical membrane-spanning segments follow: residues 30 to 50 (LLPF…PGNF), 61 to 81 (GYML…IQSL), 107 to 127 (IGLW…EFIG), 134 to 154 (LLFG…SFAI), 167 to 187 (AGIA…TFFA), 209 to 231 (VLLA…HSAL), 255 to 275 (ILIA…VAAA), 294 to 314 (FGHL…LVAG), 344 to 364 (FITI…TTAL), 365 to 385 (VLSQ…LIMF), and 401 to 421 (ITVV…FLIV).

The protein belongs to the NRAMP family.

It is found in the cell membrane. Its function is as follows. H(+)-stimulated, divalent metal cation uptake system. Involved in manganese uptake. Can probably also transport cadmium, cobalt, copper and zinc, but not iron. May be the predominant transporter of manganese during logarithmic phase growth. The chain is Divalent metal cation transporter MntH from Bacillus subtilis (strain 168).